The following is a 25-amino-acid chain: Unknown protein 4 (25 aa).

Residues 1–10 (IEHNAEEIRK) are compositionally biased toward basic and acidic residues. Residues 1–25 (IEHNAEEIRKTAIRTAVQNTAQQTK) form a disordered region. The span at 16-25 (AVQNTAQQTK) shows a compositional bias: polar residues.

This chain is Unknown protein 4, found in Lonomia obliqua (Moth).